Reading from the N-terminus, the 277-residue chain is Ribonuclease HII (277 aa).

The RNase H type-2 domain occupies 72–260 (EYIAGIDEAG…IKEMIEMKKE (189 aa)). A divalent metal cation contacts are provided by Asp-78, Glu-79, and Asp-170.

It belongs to the RNase HII family. Mn(2+) serves as cofactor. The cofactor is Mg(2+).

Its subcellular location is the cytoplasm. The enzyme catalyses Endonucleolytic cleavage to 5'-phosphomonoester.. In terms of biological role, endonuclease that specifically degrades the RNA of RNA-DNA hybrids. The sequence is that of Ribonuclease HII from Geobacillus sp. (strain WCH70).